Here is a 119-residue protein sequence, read N- to C-terminus: Large ribosomal subunit protein uL22 (119 aa).

This sequence belongs to the universal ribosomal protein uL22 family. Part of the 50S ribosomal subunit.

Its function is as follows. This protein binds specifically to 23S rRNA; its binding is stimulated by other ribosomal proteins, e.g. L4, L17, and L20. It is important during the early stages of 50S assembly. It makes multiple contacts with different domains of the 23S rRNA in the assembled 50S subunit and ribosome. The globular domain of the protein is located near the polypeptide exit tunnel on the outside of the subunit, while an extended beta-hairpin is found that lines the wall of the exit tunnel in the center of the 70S ribosome. The polypeptide is Large ribosomal subunit protein uL22 (Rickettsia conorii (strain ATCC VR-613 / Malish 7)).